Consider the following 309-residue polypeptide: Short chain dehydrogenase MYCFIDRAFT_6125 (309 aa).

Ile-43, Arg-67, Asp-88, and Arg-150 together coordinate NADP(+). The active-site Proton donor is Ser-168. Residues Tyr-182, Lys-186, Val-215, and Ser-217 each contribute to the NADP(+) site. Tyr-182 (proton acceptor) is an active-site residue. The Lowers pKa of active site Tyr role is filled by Lys-186.

The protein belongs to the short-chain dehydrogenases/reductases (SDR) family.

Its pathway is secondary metabolite biosynthesis. Short chain dehydrogenase; part of the gene cluster that mediates the biosynthesis of an emodin derivative that may be involved in black Sigatoka disease of banana. The pathway begins with the synthesis of atrochrysone thioester by the polyketide synthase PKS8-1. The atrochrysone carboxyl ACP thioesterase MYCFIDRAFT_190111 then breaks the thioester bond and releases the atrochrysone carboxylic acid from PKS8-1. The decarboxylase MYCFIDRAFT_34057 then catalyzes the concerted decarboxylation-elimination required to convert atochrysone carboxylic acid into emodin anthrone, which is further oxidized to emodin by the anthrone oxygenase MYCFIDRAFT_34418. The functions of the other tailoring enzymes as well as the final product of the cluster have still to be identified. The polypeptide is Short chain dehydrogenase MYCFIDRAFT_6125 (Pseudocercospora fijiensis (strain CIRAD86) (Black leaf streak disease fungus)).